A 212-amino-acid polypeptide reads, in one-letter code: Uridine kinase (212 aa).

An ATP-binding site is contributed by 13 to 20; sequence GASASGKS.

The protein belongs to the uridine kinase family.

Its subcellular location is the cytoplasm. It catalyses the reaction uridine + ATP = UMP + ADP + H(+). The catalysed reaction is cytidine + ATP = CMP + ADP + H(+). Its pathway is pyrimidine metabolism; CTP biosynthesis via salvage pathway; CTP from cytidine: step 1/3. It functions in the pathway pyrimidine metabolism; UMP biosynthesis via salvage pathway; UMP from uridine: step 1/1. The chain is Uridine kinase from Shewanella halifaxensis (strain HAW-EB4).